The primary structure comprises 48 residues: Mating-type pheromone BAP1(2) (48 aa).

Position 45 is a cysteine methyl ester (C45). Residue C45 is the site of S-farnesyl cysteine attachment. A propeptide spans 46 to 48 (VRG) (removed in mature form).

Its subcellular location is the cell membrane. In terms of biological role, activates B-regulated development. This chain is Mating-type pheromone BAP1(2) (BAP1(2)), found in Schizophyllum commune (Split gill fungus).